The primary structure comprises 207 residues: Ribosomal RNA small subunit methyltransferase G (207 aa).

S-adenosyl-L-methionine contacts are provided by residues Gly73, Leu78, 124-125, and Arg139; that span reads VE.

Belongs to the methyltransferase superfamily. RNA methyltransferase RsmG family.

It localises to the cytoplasm. It catalyses the reaction guanosine(527) in 16S rRNA + S-adenosyl-L-methionine = N(7)-methylguanosine(527) in 16S rRNA + S-adenosyl-L-homocysteine. Its function is as follows. Specifically methylates the N7 position of guanine in position 527 of 16S rRNA. The polypeptide is Ribosomal RNA small subunit methyltransferase G (Enterobacter sp. (strain 638)).